The sequence spans 457 residues: Forkhead box protein N3 (457 aa).

A disordered region spans residues 1–24 (MGPVMPASKKAESSGISVSSGLSQ). The span at 13 to 23 (SSGISVSSGLS) shows a compositional bias: low complexity. Ser83, Ser85, and Ser97 each carry phosphoserine. Residues 86 to 109 (PVQDLDDDTPPSPAHSDMPYDARQ) form a disordered region. The segment at residues 114–210 (KPPYSFSCLI…QALKKTPYHP (97 aa)) is a DNA-binding region (fork-head). Residues 285-422 (RTESEPPCGS…PESDDEEMKE (138 aa)) are disordered. 2 stretches are compositionally biased toward low complexity: residues 308–331 (SSAKSSTARSTSPTSDSISSSSSS) and 342–353 (GSQEGSEGSFQS). Residues 354–376 (HESHSEPEEEDRKPSPKEGKDAL) show a composition bias toward basic and acidic residues. Residues 384 to 396 (QHKKRQHFAKARK) show a composition bias toward basic residues. At Ser415 the chain carries Phosphoserine.

As to quaternary structure, interacts through its C-terminus with the C-terminus of SNW1/SKIP.

It localises to the nucleus. Its function is as follows. Acts as a transcriptional repressor. May be involved in DNA damage-inducible cell cycle arrests (checkpoints). The polypeptide is Forkhead box protein N3 (Foxn3) (Mus musculus (Mouse)).